Consider the following 1032-residue polypeptide: FACT complex subunit ctc-2 (1032 aa).

Residues 446-513 are disordered; that stretch reads DEEEAQPTPK…QKEGLAKYAE (68 aa). The segment covering 476-508 has biased composition (basic and acidic residues); sequence LRSERNTTVDEDADKRRREHQKELAQKKQKEGL. 4 coiled-coil regions span residues 485–506, 624–658, 785–805, and 949–1010; these read DEDA…KQKE, DRYA…EQDK, RRRR…IAEA, and EVEE…RKAK. The tract at residues 943–1032 is disordered; it reads NDSDDDEVEE…ERAAPKKRRK (90 aa). Acidic residues-rich tracts occupy residues 944 to 979 and 986 to 1004; these read DSDD…DSEY and EASD…DWDE.

It belongs to the peptidase M24 family. SPT16 subfamily. As to quaternary structure, forms a stable heterodimer with ctc-1/pob3. The dimer of ctc-1 and ctc-2 weakly associates with multiple molecules of nhp-1/nhp6 to form the FACT complex.

It is found in the nucleus. The protein resides in the chromosome. Component of the FACT complex, a general chromatin factor that acts to reorganize nucleosomes. The FACT complex is involved in multiple processes that require DNA as a template such as mRNA elongation, DNA replication and DNA repair. During transcription elongation the FACT complex acts as a histone chaperone that both destabilizes and restores nucleosomal structure. It facilitates the passage of RNA polymerase II and transcription by promoting the dissociation of one histone H2A-H2B dimer from the nucleosome, then subsequently promotes the reestablishment of the nucleosome following the passage of RNA polymerase II. This is FACT complex subunit ctc-2 (ctc-2) from Neurospora crassa (strain ATCC 24698 / 74-OR23-1A / CBS 708.71 / DSM 1257 / FGSC 987).